The chain runs to 388 residues: S-adenosylmethionine synthase (388 aa).

His-17 is a binding site for ATP. Asp-19 is a binding site for Mg(2+). A K(+)-binding site is contributed by Glu-45. Positions 58 and 106 each coordinate L-methionine. The tract at residues 106-116 (QSAHIAQGVDK) is flexible loop. Residues 166-168 (DAK), Asp-241, 247-248 (RK), Ala-264, and Lys-268 each bind ATP. Asp-241 serves as a coordination point for L-methionine. Lys-272 serves as a coordination point for L-methionine.

The protein belongs to the AdoMet synthase family. In terms of assembly, homotetramer; dimer of dimers. Requires Mg(2+) as cofactor. K(+) is required as a cofactor.

Its subcellular location is the cytoplasm. It carries out the reaction L-methionine + ATP + H2O = S-adenosyl-L-methionine + phosphate + diphosphate. It functions in the pathway amino-acid biosynthesis; S-adenosyl-L-methionine biosynthesis; S-adenosyl-L-methionine from L-methionine: step 1/1. Catalyzes the formation of S-adenosylmethionine (AdoMet) from methionine and ATP. The overall synthetic reaction is composed of two sequential steps, AdoMet formation and the subsequent tripolyphosphate hydrolysis which occurs prior to release of AdoMet from the enzyme. The chain is S-adenosylmethionine synthase from Cereibacter sphaeroides (strain ATCC 17023 / DSM 158 / JCM 6121 / CCUG 31486 / LMG 2827 / NBRC 12203 / NCIMB 8253 / ATH 2.4.1.) (Rhodobacter sphaeroides).